We begin with the raw amino-acid sequence, 354 residues long: Uroporphyrinogen decarboxylase (354 aa).

Residues 27–31 (RQAGR), Asp-77, Tyr-154, Ser-209, and His-327 each bind substrate.

Belongs to the uroporphyrinogen decarboxylase family. Homodimer.

It localises to the cytoplasm. It catalyses the reaction uroporphyrinogen III + 4 H(+) = coproporphyrinogen III + 4 CO2. It functions in the pathway porphyrin-containing compound metabolism; protoporphyrin-IX biosynthesis; coproporphyrinogen-III from 5-aminolevulinate: step 4/4. Its function is as follows. Catalyzes the decarboxylation of four acetate groups of uroporphyrinogen-III to yield coproporphyrinogen-III. This chain is Uroporphyrinogen decarboxylase, found in Pseudomonas syringae pv. syringae (strain B728a).